A 320-amino-acid chain; its full sequence is tRNA U34 carboxymethyltransferase (320 aa).

Carboxy-S-adenosyl-L-methionine-binding positions include Lys-89, Trp-103, Lys-108, Gly-128, 150–152 (DPT), 179–180 (IE), Met-194, Tyr-198, and Arg-313.

Belongs to the class I-like SAM-binding methyltransferase superfamily. CmoB family. Homotetramer.

The catalysed reaction is carboxy-S-adenosyl-L-methionine + 5-hydroxyuridine(34) in tRNA = 5-carboxymethoxyuridine(34) in tRNA + S-adenosyl-L-homocysteine + H(+). Functionally, catalyzes carboxymethyl transfer from carboxy-S-adenosyl-L-methionine (Cx-SAM) to 5-hydroxyuridine (ho5U) to form 5-carboxymethoxyuridine (cmo5U) at position 34 in tRNAs. This is tRNA U34 carboxymethyltransferase from Glaesserella parasuis serovar 5 (strain SH0165) (Haemophilus parasuis).